Consider the following 232-residue polypeptide: Large ribosomal subunit protein uL1 (232 aa).

It belongs to the universal ribosomal protein uL1 family. Part of the 50S ribosomal subunit.

Binds directly to 23S rRNA. The L1 stalk is quite mobile in the ribosome, and is involved in E site tRNA release. Its function is as follows. Protein L1 is also a translational repressor protein, it controls the translation of the L11 operon by binding to its mRNA. This Bacteroides fragilis (strain ATCC 25285 / DSM 2151 / CCUG 4856 / JCM 11019 / LMG 10263 / NCTC 9343 / Onslow / VPI 2553 / EN-2) protein is Large ribosomal subunit protein uL1.